We begin with the raw amino-acid sequence, 216 residues long: Thiopurine S-methyltransferase (216 aa).

Tryptophan 11, leucine 46, glutamate 67, and arginine 122 together coordinate S-adenosyl-L-methionine.

It belongs to the class I-like SAM-binding methyltransferase superfamily. TPMT family.

The protein localises to the cytoplasm. It catalyses the reaction S-adenosyl-L-methionine + a thiopurine = S-adenosyl-L-homocysteine + a thiopurine S-methylether.. The protein is Thiopurine S-methyltransferase of Vibrio parahaemolyticus serotype O3:K6 (strain RIMD 2210633).